A 400-amino-acid polypeptide reads, in one-letter code: Telomeric repeat-binding factor 2-interacting protein 1 (400 aa).

At Ala2 the chain carries N-acetylalanine. A phosphoserine mark is found at Ser36 and Ser43. The BRCT domain occupies 78 to 101 (FISTQYILDCVERNERLELEAYRL). The tract at residues 105 to 126 (SAADTGSEAKPGALAEGAAEPE) is disordered. The span at 112-125 (EAKPGALAEGAAEP) shows a compositional bias: low complexity. A Glycyl lysine isopeptide (Lys-Gly) (interchain with G-Cter in SUMO2) cross-link involves residue Lys114. One can recognise a Myb-like domain in the interval 128 to 188 (QRLAGRIAFT…SLKDRYLKHL (61 aa)). A phosphoserine mark is found at Ser154 and Ser156. Residue Lys194 forms a Glycyl lysine isopeptide (Lys-Gly) (interchain with G-Cter in SUMO2) linkage. Disordered regions lie at residues 196 to 244 (LLGD…EEIQ) and 264 to 311 (VVVD…SQPE). Ser203 and Ser206 each carry phosphoserine. Residues Lys208, Lys212, and Lys240 each participate in a glycyl lysine isopeptide (Lys-Gly) (interchain with G-Cter in SUMO2) cross-link. Residues 280 to 305 (CDDDPPTPEEDSETQPDEEEEEEEEE) show a composition bias toward acidic residues. Residue Lys373 forms a Glycyl lysine isopeptide (Lys-Gly) (interchain with G-Cter in SUMO2) linkage. The short motif at 384–400 (KKFGAQNVARRIEFRKK) is the Nuclear localization signal element.

Belongs to the RAP1 family. As to quaternary structure, associates with the I-kappa-B-kinase (IKK) core complex, composed of CHUK, IKBKB and IKBKG. Homodimer. Component of the shelterin complex (telosome) composed of TERF1, TERF2, TINF2, TERF2IP ACD and POT1. Interacts with TERF2 (but not TERF1) with its C-terminus. Interacts with SLX4/BTBD12. Interacts with TERF2; the interaction is direct.

It is found in the nucleus. The protein localises to the cytoplasm. Its subcellular location is the chromosome. It localises to the telomere. Its function is as follows. Acts both as a regulator of telomere function and as a transcription regulator. Involved in the regulation of telomere length and protection as a component of the shelterin complex (telosome). In contrast to other components of the shelterin complex, it is dispensible for telomere capping and does not participate in the protection of telomeres against non-homologous end-joining (NHEJ)-mediated repair. Instead, it is required to negatively regulate telomere recombination and is essential for repressing homology-directed repair (HDR), which can affect telomere length. Does not bind DNA directly: recruited to telomeric double-stranded 5'-TTAGGG-3' repeats via its interaction with TERF2. Independently of its function in telomeres, also acts as a transcription regulator: recruited to extratelomeric 5'-TTAGGG-3' sites via its association with TERF2 or other factors, and regulates gene expression. When cytoplasmic, associates with the I-kappa-B-kinase (IKK) complex and acts as a regulator of the NF-kappa-B signaling by promoting IKK-mediated phosphorylation of RELA/p65, leading to activate expression of NF-kappa-B target genes. The chain is Telomeric repeat-binding factor 2-interacting protein 1 (TERF2IP) from Macaca fascicularis (Crab-eating macaque).